The chain runs to 315 residues: Long form salivary protein D7L1 (315 aa).

The signal sequence occupies residues 1–18 (MIIVAVLLSFLAHLLVQA). 2 disulfides stabilise this stretch: cysteine 37/cysteine 73 and cysteine 69/cysteine 128. Tryptophan 55 serves as a coordination point for thromboxane A2. Tryptophan 58 provides a ligand contact to leukotriene C4. Tyrosine 70 provides a ligand contact to thromboxane A2. Positions 152 and 170 each coordinate leukotriene C4. Thromboxane A2 is bound at residue lysine 170. 2 cysteine pairs are disulfide-bonded: cysteine 178/cysteine 211 and cysteine 252/cysteine 263.

The protein belongs to the PBP/GOBP family. As to expression, distal-lateral and median lobes of female salivary gland (at protein level). Not detected in male salivary gland (at protein level). Expressed in female salivary gland. Not detected in female carcass without salivary glands. Expressed in male salivary gland and other tissues.

The protein resides in the secreted. Functionally, modulates blood feeding of female mosquitoes on vertebrate species by binding and sequestering different mediators involved in the host response. Binds leukotriene C4, leukotriene D4, leukotriene E4 and stable analogs of thromboxane A2, U-46619 and carbocyclic TXA2. Binds weakly prostaglandins: PGD2, PGE2 and PGF2alpha. Does not bind leukotriene B4, biogenic amines, ADP, platelet activating phospholipid derivative PAF and arachidonic acid. Inhibits agonist-induced smooth muscle contraction. Inhibits platelet aggregation induced by low concentrations of collagen in thromboxane A2-dependent manner. In Anopheles stephensi (Indo-Pakistan malaria mosquito), this protein is Long form salivary protein D7L1.